Reading from the N-terminus, the 374-residue chain is uncharacterized protein (374 aa).

A compositionally biased stretch (basic and acidic residues) spans 1–13 (METKYHEYDDVQT). 3 disordered regions span residues 1 to 20 (METK…PSNK), 91 to 193 (SPMT…PLNQ), and 236 to 374 (KINN…SDFE). A compositionally biased stretch (low complexity) spans 95-155 (NNNNNNNNNN…NNSSNNNNNN (61 aa)). A compositionally biased stretch (polar residues) spans 166–193 (ISSNQSSPLSIYSTPPNPSSYVSSPLNQ). The span at 242–262 (APPPPPKACAPPPPPPPPPPI) shows a compositional bias: pro residues. Residues 277–300 (NNNNNNNNNNNSSNTNDSNNTNNT) show a composition bias toward low complexity.

This is an uncharacterized protein from Dictyostelium discoideum (Social amoeba).